A 281-amino-acid polypeptide reads, in one-letter code: Bis(5'-nucleosyl)-tetraphosphatase, symmetrical (281 aa).

Belongs to the Ap4A hydrolase family.

It carries out the reaction P(1),P(4)-bis(5'-adenosyl) tetraphosphate + H2O = 2 ADP + 2 H(+). In terms of biological role, hydrolyzes diadenosine 5',5'''-P1,P4-tetraphosphate to yield ADP. In Acidovorax ebreus (strain TPSY) (Diaphorobacter sp. (strain TPSY)), this protein is Bis(5'-nucleosyl)-tetraphosphatase, symmetrical.